The chain runs to 416 residues: CinA-like protein (416 aa).

Belongs to the CinA family.

This is CinA-like protein from Syntrophomonas wolfei subsp. wolfei (strain DSM 2245B / Goettingen).